The sequence spans 423 residues: Zinc-type alcohol dehydrogenase-like protein C1198.01 (423 aa).

The interval 14–36 (KQLGHREVSEGSTQPKPDPSGAT) is disordered. 6 residues coordinate Zn(2+): Cys-74, His-97, Cys-127, Cys-130, Cys-133, and Cys-141.

Belongs to the zinc-containing alcohol dehydrogenase family. Class-III subfamily. It depends on Zn(2+) as a cofactor.

The protein resides in the golgi apparatus. The polypeptide is Zinc-type alcohol dehydrogenase-like protein C1198.01 (Schizosaccharomyces pombe (strain 972 / ATCC 24843) (Fission yeast)).